Reading from the N-terminus, the 163-residue chain is Large ribosomal subunit protein uL10 (163 aa).

Belongs to the universal ribosomal protein uL10 family. In terms of assembly, part of the ribosomal stalk of the 50S ribosomal subunit. The N-terminus interacts with L11 and the large rRNA to form the base of the stalk. The C-terminus forms an elongated spine to which L12 dimers bind in a sequential fashion forming a multimeric L10(L12)X complex.

Functionally, forms part of the ribosomal stalk, playing a central role in the interaction of the ribosome with GTP-bound translation factors. The chain is Large ribosomal subunit protein uL10 from Actinobacillus succinogenes (strain ATCC 55618 / DSM 22257 / CCUG 43843 / 130Z).